The sequence spans 149 residues: SsrA-binding protein (149 aa).

Belongs to the SmpB family.

It localises to the cytoplasm. Functionally, required for rescue of stalled ribosomes mediated by trans-translation. Binds to transfer-messenger RNA (tmRNA), required for stable association of tmRNA with ribosomes. tmRNA and SmpB together mimic tRNA shape, replacing the anticodon stem-loop with SmpB. tmRNA is encoded by the ssrA gene; the 2 termini fold to resemble tRNA(Ala) and it encodes a 'tag peptide', a short internal open reading frame. During trans-translation Ala-aminoacylated tmRNA acts like a tRNA, entering the A-site of stalled ribosomes, displacing the stalled mRNA. The ribosome then switches to translate the ORF on the tmRNA; the nascent peptide is terminated with the 'tag peptide' encoded by the tmRNA and targeted for degradation. The ribosome is freed to recommence translation, which seems to be the essential function of trans-translation. The protein is SsrA-binding protein of Wolbachia sp. subsp. Brugia malayi (strain TRS).